The chain runs to 844 residues: Meiotically up-regulated gene 61 protein (844 aa).

2 disordered regions span residues 333–354 (ENNSFSWTHPKKNSSSPLPQSQ) and 384–415 (NFGLEASNTSTPEKKKFDSQKPDDDSVNEISS). The segment covering 384 to 394 (NFGLEASNTST) has biased composition (polar residues). The span at 395-407 (PEKKKFDSQKPDD) shows a compositional bias: basic and acidic residues. Residues 459 to 479 (VVNSLWLVLLVVPLLGFVGFW) traverse the membrane as a helical segment. ATP is bound at residue 605 to 612 (AKNLNGKS). A helical transmembrane segment spans residues 705-725 (VISCWRIYLLIGILAAITGTV).

As to quaternary structure, interacts with sad1.

The protein resides in the endoplasmic reticulum membrane. The protein localises to the nucleus membrane. Required for correct meiotic chromosome segregation. The chain is Meiotically up-regulated gene 61 protein (mug61) from Schizosaccharomyces pombe (strain 972 / ATCC 24843) (Fission yeast).